Here is a 284-residue protein sequence, read N- to C-terminus: Ribosome-associated protein oga1 (284 aa).

Positions 1–284 are disordered; sequence MSVASKNLFD…LSETDFPALA (284 aa). The span at 22 to 36 shows a compositional bias: basic and acidic residues; sequence TEKKTAASRDKKRSD. A phosphoserine mark is found at Ser-37 and Ser-51. Basic and acidic residues-rich tracts occupy residues 52–73 and 119–141; these read RKRDPNQPTPRERTVNKKADQP and GREFDRHSQTGRVDTKKATERGW. Residue Thr-160 is modified to Phosphothreonine. Phosphoserine is present on Ser-162. Thr-166 carries the post-translational modification Phosphothreonine. Composition is skewed to basic and acidic residues over residues 172-186 and 194-209; these read ENVKTLDEYLSERKS and TVEKLENATKVEKSAP. Residues 214-224 are compositionally biased toward low complexity; it reads ASLKKSASQKK. Positions 226 to 237 are enriched in basic and acidic residues; it reads AAKESKPKKVLL. A compositionally biased stretch (low complexity) spans 245–254; sequence ARPARGGRPN. The segment covering 263 to 277 has biased composition (polar residues); that stretch reads ETASKTQQAPPTLSE.

This sequence belongs to the STM1 family. As to quaternary structure, associates with mature 80S ribosomes. Binds to the head domain of the 40S ribosomal subunit and prevents mRNA binding by inserting its alpha-helix domain towards the mRNA entry tunnel at the decoding site, where it blocks the binding of tRNA and mRNA at the A- and P-sites. Interacts with eEF2; interaction sequesters eEF2 at the A-site of the ribosome, thereby blocking the interaction sites of the mRNA-tRNA complex, promoting ribosome stabilization and hibernation. Interacts with sad1. Phosphorylation by TORC1 upon nutrient replenishment inhibits STM1 and causes its release from dormant ribosomes.

It is found in the cytoplasm. Functionally, ribosome preservation factor that protect a small pool of nontranslating, vacant ribosomes in cells under nutrient starvation conditions. Under nutrient-limiting conditions, cells reduce ribosome biogenesis and degrade ribosomes via autophagy (ribophagy) or proteasomal degradation. To avoid excessive degradation during starvation, STM1 binds to and protects 80S ribosomes from proteasomal degradation. Under nutrient-sufficient conditions, TORC1 phosphorylates and inhibits STM1 to prevent formation of dormant 80S ribosomes. Acts as an inhibitor of mRNA translation by promoting ribosome hibernation: clamps the two ribosomal subunits, thereby preventing their dissociation, and inhibits translation by excluding mRNA-binding. Acts via its association with eEF2, promoting ribosome stabilization and storage in an inactive state. May also repress translation by preventing association of eEF3 with ribosomes. Binds specifically G4 quadruplex (these are four-stranded right-handed helices, stabilized by guanine base quartets) and purine motif triplex (characterized by a third, antiparallel purine-rich DNA strand located within the major groove of a homopurine stretch of duplex DNA) nucleic acid structures. These structures may be present at telomeres or in rRNAs. Extends chronological lifespan when overexpressed. This Schizosaccharomyces pombe (strain 972 / ATCC 24843) (Fission yeast) protein is Ribosome-associated protein oga1.